A 389-amino-acid chain; its full sequence is Chitin-binding protein CbpD (389 aa).

The N-terminal stretch at 1 to 25 is a signal peptide; sequence MKHYSATLALLPLTLALFLPQAAHA. Residues 26–208 form the Chitin-binding type-4 domain; it reads HGSMETPPSR…EAFYACIDVS (183 aa). Tyrosine 37 is subject to Phosphotyrosine. Residue serine 210 is modified to Phosphoserine.

Its subcellular location is the secreted. In terms of biological role, binds but does not hydrolyze chitin. The protein is Chitin-binding protein CbpD (cpbD) of Pseudomonas aeruginosa (strain UCBPP-PA14).